The following is a 641-amino-acid chain: Threonine--tRNA ligase (641 aa).

The region spanning 1–61 (MIKINLLNHQ…TQDGDLEILA (61 aa)) is the TGS domain. The segment at 240–538 (DHKRLNKKLD…LIEENKGVFP (299 aa)) is catalytic. Residues C334, H385, and H515 each coordinate Zn(2+).

This sequence belongs to the class-II aminoacyl-tRNA synthetase family. In terms of assembly, homodimer. Requires Zn(2+) as cofactor.

Its subcellular location is the cytoplasm. The enzyme catalyses tRNA(Thr) + L-threonine + ATP = L-threonyl-tRNA(Thr) + AMP + diphosphate + H(+). Functionally, catalyzes the attachment of threonine to tRNA(Thr) in a two-step reaction: L-threonine is first activated by ATP to form Thr-AMP and then transferred to the acceptor end of tRNA(Thr). Also edits incorrectly charged L-seryl-tRNA(Thr). This chain is Threonine--tRNA ligase, found in Phytoplasma australiense.